The sequence spans 691 residues: Alpha-1,4-glucan:maltose-1-phosphate maltosyltransferase (691 aa).

Residues K280, Q341, and D376 each coordinate alpha-maltose 1-phosphate. D411 acts as the Nucleophile in catalysis. An alpha-maltose 1-phosphate-binding site is contributed by N412. The Proton donor role is filled by E440. Alpha-maltose 1-phosphate is bound at residue 550–551 (KY).

It belongs to the glycosyl hydrolase 13 family. GlgE subfamily. As to quaternary structure, homodimer.

It catalyses the reaction alpha-maltose 1-phosphate + [(1-&gt;4)-alpha-D-glucosyl](n) = [(1-&gt;4)-alpha-D-glucosyl](n+2) + phosphate. Functionally, maltosyltransferase that uses maltose 1-phosphate (M1P) as the sugar donor to elongate linear or branched alpha-(1-&gt;4)-glucans. Is involved in a branched alpha-glucan biosynthetic pathway from trehalose, together with TreS, Mak and GlgB. This is Alpha-1,4-glucan:maltose-1-phosphate maltosyltransferase from Arcanobacterium haemolyticum (strain ATCC 9345 / DSM 20595 / CCM 5947 / CCUG 17215 / LMG 16163 / NBRC 15585 / NCTC 8452 / 11018).